The chain runs to 3086 residues: Genome polyprotein (3086 aa).

The Peptidase S30 domain maps to arginine 122–tyrosine 256. Residues histidine 173, aspartate 182, and serine 215 each act as for P1 proteinase activity in the active site. One can recognise a Peptidase C6 domain in the interval tyrosine 590–glycine 711. Catalysis depends on for helper component proteinase activity residues cysteine 598 and histidine 670. Positions isoleucine 1189 to alanine 1341 constitute a Helicase ATP-binding domain. Glycine 1202–serine 1209 serves as a coordination point for ATP. The short motif at aspartate 1291 to histidine 1294 is the DEAH box element. O-(5'-phospho-RNA)-tyrosine is present on tyrosine 1870. The tract at residues histidine 1970 to alanine 1990 is disordered. The region spanning serine 2000–serine 2217 is the Peptidase C4 domain. Active-site for nuclear inclusion protein A activity residues include histidine 2045, aspartate 2080, and cysteine 2149. Residues tryptophan 2482 to isoleucine 2606 enclose the RdRp catalytic domain. Residues threonine 2762–threonine 2821 are compositionally biased toward low complexity. Residues threonine 2762 to valine 2822 form a disordered region. Threonine 3069 bears the Phosphothreonine mark.

Belongs to the potyviridae genome polyprotein family. In terms of processing, VPg is uridylylated by the polymerase and is covalently attached to the 5'-end of the genomic RNA. This uridylylated form acts as a nucleotide-peptide primer for the polymerase. Genome polyprotein of potyviruses undergoes post-translational proteolytic processing by the main proteinase NIa-pro resulting in the production of at least ten individual proteins. The P1 proteinase and the HC-pro cleave only their respective C-termini autocatalytically. 6K1 is essential for proper proteolytic separation of P3 from CI.

It is found in the host cytoplasmic vesicle membrane. The protein resides in the host cytoplasmic vesicle. It localises to the virion. The catalysed reaction is RNA(n) + a ribonucleoside 5'-triphosphate = RNA(n+1) + diphosphate. The enzyme catalyses Hydrolyzes glutaminyl bonds, and activity is further restricted by preferences for the amino acids in P6 - P1' that vary with the species of potyvirus, e.g. Glu-Xaa-Xaa-Tyr-Xaa-Gln-|-(Ser or Gly) for the enzyme from tobacco etch virus. The natural substrate is the viral polyprotein, but other proteins and oligopeptides containing the appropriate consensus sequence are also cleaved.. It carries out the reaction Hydrolyzes a Gly-|-Gly bond at its own C-terminus, commonly in the sequence -Tyr-Xaa-Val-Gly-|-Gly, in the processing of the potyviral polyprotein.. Required for aphid transmission and also has proteolytic activity. Only cleaves a Gly-Gly dipeptide at its own C-terminus. Interacts with virions and aphid stylets. Acts as a suppressor of RNA-mediated gene silencing, also known as post-transcriptional gene silencing (PTGS), a mechanism of plant viral defense that limits the accumulation of viral RNAs. May have RNA-binding activity. In terms of biological role, has helicase activity. It may be involved in replication. Its function is as follows. Indispensable for virus replication. Reduces the abundance of host transcripts related to jasmonic acid biosynthesis therefore altering the host defenses. In order to increase its own stability, decreases host protein degradation pathways. Functionally, indispensable for virus replication. Mediates the cap-independent, EIF4E-dependent translation of viral genomic RNAs. Binds to the cap-binding site of host EIF4E and thus interferes with the host EIF4E-dependent mRNA export and translation. VPg-RNA directly binds EIF4E and is a template for transcription. Also forms trimeric complexes with EIF4E-EIF4G, which are templates for translation. In terms of biological role, has RNA-binding and proteolytic activities. Its function is as follows. An RNA-dependent RNA polymerase that plays an essential role in the virus replication. Functionally, involved in aphid transmission, cell-to-cell and systemis movement, encapsidation of the viral RNA and in the regulation of viral RNA amplification. This is Genome polyprotein from Dactylis glomerata (Orchard grass).